The following is a 330-amino-acid chain: ATP-dependent Clp protease proteolytic subunit-related protein 3, chloroplastic (330 aa).

A chloroplast-targeting transit peptide spans 1–43; that stretch reads MASCLQASMNSLLPRSSSFSPHPPLSSNSSGRRNLKTFRYAFR. The tract at residues 7-32 is disordered; it reads ASMNSLLPRSSSFSPHPPLSSNSSGR. The span at 8-30 shows a compositional bias: low complexity; sequence SMNSLLPRSSSFSPHPPLSSNSS.

This sequence belongs to the peptidase S14 family. In terms of assembly, component of the chloroplastic Clp protease core complex which consist of at least 16 proteins: CLPP4 (3 copies), CLPP5 (3 copies), CLPR4 (2 copies), ClpP1 (1 copy), CLPP6 (1 copy), CLPR2 (1 copy), CLPT1 (1 copy), CLPT2 (1 copy) and 3 copies of CLPP3 and/or CLPR1 and/or CLPR3. The core complex is organized in two heptameric rings, one containing CLPP3,4,5,6 in a 1:2:3:1 ratio and the other CLPP1 and CLPR1,2,3,4 in a 3:1:1:1:1 ratio.

It localises to the plastid. The protein resides in the chloroplast. In Arabidopsis thaliana (Mouse-ear cress), this protein is ATP-dependent Clp protease proteolytic subunit-related protein 3, chloroplastic.